We begin with the raw amino-acid sequence, 509 residues long: 2-isopropylmalate synthase (509 aa).

The Pyruvate carboxyltransferase domain occupies 4 to 266 (VRIFDTTLRD…YTGIKTEEIY (263 aa)). Asp-13, His-201, His-203, and Asn-237 together coordinate Mn(2+). The tract at residues 390–509 (TLDYFHISTG…FDYQAKGEKQ (120 aa)) is regulatory domain.

This sequence belongs to the alpha-IPM synthase/homocitrate synthase family. LeuA type 1 subfamily. In terms of assembly, homodimer. It depends on Mn(2+) as a cofactor.

The protein localises to the cytoplasm. The catalysed reaction is 3-methyl-2-oxobutanoate + acetyl-CoA + H2O = (2S)-2-isopropylmalate + CoA + H(+). The protein operates within amino-acid biosynthesis; L-leucine biosynthesis; L-leucine from 3-methyl-2-oxobutanoate: step 1/4. Catalyzes the condensation of the acetyl group of acetyl-CoA with 3-methyl-2-oxobutanoate (2-ketoisovalerate) to form 3-carboxy-3-hydroxy-4-methylpentanoate (2-isopropylmalate). This Carboxydothermus hydrogenoformans (strain ATCC BAA-161 / DSM 6008 / Z-2901) protein is 2-isopropylmalate synthase.